The following is a 344-amino-acid chain: Uroporphyrinogen decarboxylase (344 aa).

Substrate-binding positions include 26–30, aspartate 75, tyrosine 150, serine 205, and histidine 323; that span reads RQAGR.

This sequence belongs to the uroporphyrinogen decarboxylase family. In terms of assembly, homodimer.

It is found in the cytoplasm. The catalysed reaction is uroporphyrinogen III + 4 H(+) = coproporphyrinogen III + 4 CO2. Its pathway is porphyrin-containing compound metabolism; protoporphyrin-IX biosynthesis; coproporphyrinogen-III from 5-aminolevulinate: step 4/4. Its function is as follows. Catalyzes the decarboxylation of four acetate groups of uroporphyrinogen-III to yield coproporphyrinogen-III. In Corynebacterium diphtheriae (strain ATCC 700971 / NCTC 13129 / Biotype gravis), this protein is Uroporphyrinogen decarboxylase.